The sequence spans 559 residues: Formate--tetrahydrofolate ligase (559 aa).

68 to 75 (TPAGEGKT) is a binding site for ATP.

It belongs to the formate--tetrahydrofolate ligase family.

The catalysed reaction is (6S)-5,6,7,8-tetrahydrofolate + formate + ATP = (6R)-10-formyltetrahydrofolate + ADP + phosphate. It participates in one-carbon metabolism; tetrahydrofolate interconversion. The sequence is that of Formate--tetrahydrofolate ligase from Moorella thermoacetica (strain ATCC 39073 / JCM 9320).